A 302-amino-acid polypeptide reads, in one-letter code: MKKIVVVCGPTAAGKSQLGMHLAQHLGVPVLSADSRQVYREFDIGTAKPTREEQRRVEHCLIDVAWPTEHFNVARYRELADAEIDRLTRQGKPALLVGGSGLYLRAVSGGLEPPAVPPDPALRARLAVERLDALYQRLQQLDPESAGRIHPNDQVRIERALEVCLTTGQPLSAQRRLRARDFSLLALGVGSGREALVRRIEQRTHRMIEAGWLEEVEYLRAKYGPDLPLLSTLGYAELGAYLEERWDLAEALQQIVVHTRQFAKRQMTWFRAEPDVHWLDESAGRQTLEQQSIEQVERFLAG.

9–16 (GPTAAGKS) lines the ATP pocket. Substrate is bound at residue 11–16 (TAAGKS). Residues 34 to 37 (DSRQ) are interaction with substrate tRNA.

It belongs to the IPP transferase family. As to quaternary structure, monomer. Mg(2+) is required as a cofactor.

It catalyses the reaction adenosine(37) in tRNA + dimethylallyl diphosphate = N(6)-dimethylallyladenosine(37) in tRNA + diphosphate. In terms of biological role, catalyzes the transfer of a dimethylallyl group onto the adenine at position 37 in tRNAs that read codons beginning with uridine, leading to the formation of N6-(dimethylallyl)adenosine (i(6)A). In Gloeobacter violaceus (strain ATCC 29082 / PCC 7421), this protein is tRNA dimethylallyltransferase.